The following is a 215-amino-acid chain: Adenylate kinase (215 aa).

Residue 10 to 15 participates in ATP binding; sequence GAGKGT. The segment at 30-59 is NMP; sequence STGDILRANVRDGTKLGKEAKGYMDKGELV. AMP contacts are provided by residues Thr31, Arg36, 57–59, 85–88, and Gln92; these read ELV and GYPR. Positions 126-162 are LID; that stretch reads GRYVCTCGESYHMKFNPPKKENVCDACGADLYQRDDD. Arg127 serves as a coordination point for ATP. Zn(2+) contacts are provided by Cys130 and Cys132. Residue 135-136 coordinates ATP; it reads SY. The Zn(2+) site is built by Cys149 and Cys152. AMP contacts are provided by Arg159 and Arg170. Gly198 contacts ATP.

Belongs to the adenylate kinase family. As to quaternary structure, monomer.

Its subcellular location is the cytoplasm. It carries out the reaction AMP + ATP = 2 ADP. The protein operates within purine metabolism; AMP biosynthesis via salvage pathway; AMP from ADP: step 1/1. Functionally, catalyzes the reversible transfer of the terminal phosphate group between ATP and AMP. Plays an important role in cellular energy homeostasis and in adenine nucleotide metabolism. In Methanococcoides burtonii (strain DSM 6242 / NBRC 107633 / OCM 468 / ACE-M), this protein is Adenylate kinase.